The sequence spans 351 residues: Glycerol-3-phosphate dehydrogenase [NAD(P)+] (351 aa).

Positions 18, 19, 38, and 122 each coordinate NADPH. The sn-glycerol 3-phosphate site is built by Lys122, Gly153, and Ser155. Ala157 contributes to the NADPH binding site. 5 residues coordinate sn-glycerol 3-phosphate: Lys208, Asp261, Ser271, Arg272, and Asn273. Lys208 functions as the Proton acceptor in the catalytic mechanism. Arg272 is a binding site for NADPH. Residue Glu297 participates in NADPH binding.

Belongs to the NAD-dependent glycerol-3-phosphate dehydrogenase family.

The protein resides in the cytoplasm. The enzyme catalyses sn-glycerol 3-phosphate + NAD(+) = dihydroxyacetone phosphate + NADH + H(+). The catalysed reaction is sn-glycerol 3-phosphate + NADP(+) = dihydroxyacetone phosphate + NADPH + H(+). It functions in the pathway membrane lipid metabolism; glycerophospholipid metabolism. Its function is as follows. Catalyzes the reduction of the glycolytic intermediate dihydroxyacetone phosphate (DHAP) to sn-glycerol 3-phosphate (G3P), the key precursor for phospholipid synthesis. The chain is Glycerol-3-phosphate dehydrogenase [NAD(P)+] from Bordetella parapertussis (strain 12822 / ATCC BAA-587 / NCTC 13253).